Here is a 483-residue protein sequence, read N- to C-terminus: Zinc metalloproteinase/disintegrin (483 aa).

An N-terminal signal peptide occupies residues M1–S20. Residues I21–E191 constitute a propeptide that is removed on maturation. The Peptidase M12B domain maps to R198–P394. Ca(2+) contacts are provided by E201 and D285. 3 cysteine pairs are disulfide-bonded: C309-C389, C349-C373, and C351-C356. Zn(2+) is bound at residue H334. E335 is a catalytic residue. Zn(2+)-binding residues include H338 and H344. 2 residues coordinate Ca(2+): C389 and N392. Residues L395–E414 constitute a propeptide that is removed on maturation. A Disintegrin domain is found at T402 to A483. 4 disulfides stabilise this stretch: C425–C448, C439–C445, C444–C469, and C457–C476. The short motif at K461–D463 is the Cell attachment site; atypical (KGD) element.

It belongs to the venom metalloproteinase (M12B) family. P-II subfamily. P-IIe sub-subfamily. Heterodimer with piscivostatin-alpha; disulfide-linked (disintegrin). Requires Zn(2+) as cofactor. As to expression, expressed by the venom gland.

It localises to the secreted. In terms of biological role, impairs hemostasis in the envenomed animal. Functionally, inhibits platelet aggregation induced by ADP. Acts by inhibiting fibrinogen interaction with platelet receptors GPIIb/GPIIIa (ITGA2B/ITGB3). Also inhibits platelet aggregate dissociation in human platelet-rich plasma. The protein is Zinc metalloproteinase/disintegrin of Agkistrodon piscivorus piscivorus (Eastern cottonmouth).